The primary structure comprises 175 residues: ATP synthase subunit b (175 aa).

A helical membrane pass occupies residues 19-35 (GLIFWTTVTFLIVLFIL).

This sequence belongs to the ATPase B chain family. In terms of assembly, F-type ATPases have 2 components, F(1) - the catalytic core - and F(0) - the membrane proton channel. F(1) has five subunits: alpha(3), beta(3), gamma(1), delta(1), epsilon(1). F(0) has four main subunits: a(1), b(2) and c(10-14). The alpha and beta chains form an alternating ring which encloses part of the gamma chain. F(1) is attached to F(0) by a central stalk formed by the gamma and epsilon chains, while a peripheral stalk is formed by the delta and b chains.

It is found in the cell inner membrane. Its function is as follows. F(1)F(0) ATP synthase produces ATP from ADP in the presence of a proton or sodium gradient. F-type ATPases consist of two structural domains, F(1) containing the extramembraneous catalytic core and F(0) containing the membrane proton channel, linked together by a central stalk and a peripheral stalk. During catalysis, ATP synthesis in the catalytic domain of F(1) is coupled via a rotary mechanism of the central stalk subunits to proton translocation. Component of the F(0) channel, it forms part of the peripheral stalk, linking F(1) to F(0). The polypeptide is ATP synthase subunit b (Chlorobium phaeobacteroides (strain BS1)).